A 185-amino-acid polypeptide reads, in one-letter code: Hypoxanthine/guanine phosphoribosyltransferase (185 aa).

The protein belongs to the purine/pyrimidine phosphoribosyltransferase family. Archaeal HPRT subfamily. Homodimer.

Its subcellular location is the cytoplasm. The enzyme catalyses IMP + diphosphate = hypoxanthine + 5-phospho-alpha-D-ribose 1-diphosphate. The catalysed reaction is GMP + diphosphate = guanine + 5-phospho-alpha-D-ribose 1-diphosphate. It participates in purine metabolism; IMP biosynthesis via salvage pathway; IMP from hypoxanthine: step 1/1. Functionally, catalyzes a salvage reaction resulting in the formation of IMP that is energically less costly than de novo synthesis. The sequence is that of Hypoxanthine/guanine phosphoribosyltransferase from Aciduliprofundum boonei (strain DSM 19572 / T469).